The sequence spans 191 residues: Thymidine kinase (191 aa).

Residues 9–16 and 85–88 each bind ATP; these read GTMNSGKT and DEAQ. The active-site Proton acceptor is the Glu-86. Positions 143, 146, 180, and 183 each coordinate Zn(2+).

The protein belongs to the thymidine kinase family. In terms of assembly, homotetramer.

The protein localises to the cytoplasm. The catalysed reaction is thymidine + ATP = dTMP + ADP + H(+). The sequence is that of Thymidine kinase from Streptococcus gordonii (strain Challis / ATCC 35105 / BCRC 15272 / CH1 / DL1 / V288).